The primary structure comprises 225 residues: Protein E26 (225 aa).

As to quaternary structure, interacts with proteins IE0 and IE1. Interacts with protein FP25K. Interacts with host importin alpha-16. Post-translationally, palmitoylated.

The protein localises to the host nucleus inner membrane. Its subcellular location is the virion. It localises to the host cytoplasm. The protein resides in the host nucleus. Its function is as follows. Plays a role in the sorting of ODV envelope proteins to the host inner nuclear membrane. May facilitate the fusion and release of nucleocapsids into the cytoplasm. Modulates the expression levels of IE0 and IE1. In Lepidoptera (butterflies and moths), this protein is Protein E26 (DA26).